Here is a 311-residue protein sequence, read N- to C-terminus: MKISPDQKDKKSLFKKHFAYLKLTEKELNDPKIQTLLEVAWNHFDQCRKIKERRCSNKGDIHLQAVREWLPWEFNANQLKKNSTKETTQVSENEFMGNVMLMQTICPKLVNKANWFDLTYERFIVTKPNWFKYMDLIPMIQNLPVTPSDKNSFGYAYKKISNLFETEKKTKKRIFFFNLQKNNINNMAACMLTCEIAKKNIKVALIYCEEFVSRYDKSYWKVDDDLNLLDEAKVIIFIGLGQESFHNKNYILFMTRLFINCFLKRKDVFFFSTTYSDGNGLIQTFKNQIISSANWVKHFFEQLNDLLMINI.

This is an uncharacterized protein from Mycoplasma genitalium (strain ATCC 33530 / DSM 19775 / NCTC 10195 / G37) (Mycoplasmoides genitalium).